The chain runs to 348 residues: Succinylglutamate desuccinylase (348 aa).

Zn(2+) is bound by residues H67, E70, and H164. E228 is an active-site residue.

Belongs to the AspA/AstE family. Succinylglutamate desuccinylase subfamily. Zn(2+) is required as a cofactor.

The catalysed reaction is N-succinyl-L-glutamate + H2O = L-glutamate + succinate. Its pathway is amino-acid degradation; L-arginine degradation via AST pathway; L-glutamate and succinate from L-arginine: step 5/5. Functionally, transforms N(2)-succinylglutamate into succinate and glutamate. The protein is Succinylglutamate desuccinylase of Shewanella denitrificans (strain OS217 / ATCC BAA-1090 / DSM 15013).